Reading from the N-terminus, the 600-residue chain is Beta-hexosaminidase (600 aa).

Residues 1-18 (MRISQICTVLSTVTSAVA) form the signal peptide. Residues 19 to 96 (VGVNPLPAPR…PFPTPTAGAS (78 aa)) constitute a propeptide that is removed on maturation. An O-linked (Man...) threonine glycan is attached at Thr78. Residues Ser83 and Ser84 are each glycosylated (O-linked (Man...) serine). Catalysis depends on charge relay system residues Asp222 and His275. The cysteines at positions 290 and 351 are disulfide-linked. A glycan (N-linked (HexNAc...) asparagine) is linked at Asn318. Catalysis depends on Glu346, which acts as the Charge relay system. Asn353 carries N-linked (GlcNAc...) asparagine glycosylation. Asn387 is a glycosylation site (N-linked (HexNAc...) asparagine). Residue Asn428 is glycosylated (N-linked (GlcNAc...) asparagine). A disulfide bridge links Cys448 with Cys483. N-linked (GlcNAc...) asparagine glycans are attached at residues Asn500 and Asn525. Cys583 and Cys590 form a disulfide bridge.

It belongs to the glycosyl hydrolase 20 family. As to quaternary structure, homodimer. Oligosaccharide moieties may also take part in the dimerization. Dimerization is a pH-dependent reversible process. The individual catalytic cores dimerize and the catalytic core of one subunit in the active dimer interacts with the propeptide of the second subunit. In terms of processing, the precursor of the propeptide is intracellularly processed in the endoplasmic reticulum by a dibasic peptidase, different from Kex2, removing Lys-97--Arg-101 from the precursor producing the activated propeptide. The propeptide binds non-covalently to the catalytic domain. Propeptide binding is necessary for full activation of the enzyme, dimerization of the catalytic domain and secretion of the active enzyme. Post-translationally, O-glycosylated. O-glycosylation (O-mannosylation) at the C-terminus of the propeptide is necessary for full enzyme activity. N-glycosylated. N-glycosylation of the catalytic domain increases the stability and solubility of the enzyme, especially at low pH. Contains high mannose-type (M4-M11) N-glycans at the C-terminus. N-glycan deglycosylation does not affect enzyme activity.

It localises to the secreted. The catalysed reaction is Hydrolysis of terminal non-reducing N-acetyl-D-hexosamine residues in N-acetyl-beta-D-hexosaminides.. With respect to regulation, activated by non-covalent binding of the propeptide to the catalytic domain. The concentration of the propeptide is regulated in the endoplasmic reticulum and the propeptide thus regulates the amount of the active enzyme at various stages of the growth cycle. The dimeric enzyme has about half of the maximal activity in the presence of one bound propeptide, but is fully active with two bound O-glycosylated propeptides. Inhibited by N-acetylglucosamine (NAG)-thiazoline. In terms of biological role, selectively hydrolyzes GlcNAcbeta(1-&gt;4)GlcNAc (N,N'-diacetylchitobiose) and Gal-NAcbeta(1-&gt;4)GlcNAc, but not their C-2 epimers GlcNAcbeta(1-&gt;4)ManNAc or Gal-NAcbeta(1-&gt;4)ManNAc. However, hydrolyzes both GlcNAcbeta(1-&gt;6)GlcNAc and GlcNAcbeta(1-&gt;6)ManNAc. Part of the binary chitinolytic system. Involved in hydrolysis of chitobiose and higher chito-oligomers (produced from cell wall chitin by endochitinases), thus contributing to the formation of germ tubes, fruit-bodies and septa during hyphenation. Hydrolyzes synthetic substrate p-nitrophenyl-beta-N-acetyl-D-glucosaminide (pNP-GlcNAc). Hydrolyzes synthetic substrate p-nitrophenyl-beta-N-acetyl-D-galactosaminide (pNP-GalNAc). Hydrolyzes chromogenic substrate 4-nitrophenyl-2-acetamido-2-deoxyglucopyranoside. The protein is Beta-hexosaminidase of Aspergillus oryzae (Yellow koji mold).